The following is a 481-amino-acid chain: Proline--tRNA ligase (481 aa).

The protein belongs to the class-II aminoacyl-tRNA synthetase family. ProS type 3 subfamily. In terms of assembly, homodimer.

It localises to the cytoplasm. It catalyses the reaction tRNA(Pro) + L-proline + ATP = L-prolyl-tRNA(Pro) + AMP + diphosphate. In terms of biological role, catalyzes the attachment of proline to tRNA(Pro) in a two-step reaction: proline is first activated by ATP to form Pro-AMP and then transferred to the acceptor end of tRNA(Pro). This Prosthecochloris aestuarii (strain DSM 271 / SK 413) protein is Proline--tRNA ligase.